The chain runs to 276 residues: ESX-2 secretion-associated protein EspG2 (276 aa).

The protein belongs to the EspG family. As to quaternary structure, interacts specifically with ESX-2-dependent PE/PPE proteins.

It is found in the cytoplasm. Specific chaperone for cognate PE/PPE proteins. Plays an important role in preventing aggregation of PE/PPE dimers. This Mycobacterium tuberculosis (strain CDC 1551 / Oshkosh) protein is ESX-2 secretion-associated protein EspG2.